A 305-amino-acid polypeptide reads, in one-letter code: Ribonuclease Z (305 aa).

Zn(2+)-binding residues include H63, H65, D67, H68, H142, D209, and H267. D67 serves as the catalytic Proton acceptor.

It belongs to the RNase Z family. In terms of assembly, homodimer. Requires Zn(2+) as cofactor.

The enzyme catalyses Endonucleolytic cleavage of RNA, removing extra 3' nucleotides from tRNA precursor, generating 3' termini of tRNAs. A 3'-hydroxy group is left at the tRNA terminus and a 5'-phosphoryl group is left at the trailer molecule.. In terms of biological role, zinc phosphodiesterase, which displays some tRNA 3'-processing endonuclease activity. Probably involved in tRNA maturation, by removing a 3'-trailer from precursor tRNA. This chain is Ribonuclease Z, found in Nocardia farcinica (strain IFM 10152).